We begin with the raw amino-acid sequence, 294 residues long: ATP synthase gamma chain (294 aa).

This sequence belongs to the ATPase gamma chain family. As to quaternary structure, F-type ATPases have 2 components, CF(1) - the catalytic core - and CF(0) - the membrane proton channel. CF(1) has five subunits: alpha(3), beta(3), gamma(1), delta(1), epsilon(1). CF(0) has three main subunits: a, b and c.

The protein resides in the cell inner membrane. Its function is as follows. Produces ATP from ADP in the presence of a proton gradient across the membrane. The gamma chain is believed to be important in regulating ATPase activity and the flow of protons through the CF(0) complex. The polypeptide is ATP synthase gamma chain (Rhizobium leguminosarum bv. trifolii (strain WSM2304)).